Here is a 437-residue protein sequence, read N- to C-terminus: O-acetyl-L-homoserine sulfhydrylase (437 aa).

The residue at position 216 (lysine 216) is an N6-(pyridoxal phosphate)lysine.

This sequence belongs to the trans-sulfuration enzymes family. As to quaternary structure, homohexamer. It depends on pyridoxal 5'-phosphate as a cofactor.

The enzyme catalyses O-acetyl-L-homoserine + hydrogen sulfide = L-homocysteine + acetate. The catalysed reaction is O-acetyl-L-homoserine + methanethiol = L-methionine + acetate + H(+). The protein operates within amino-acid biosynthesis; L-methionine biosynthesis via de novo pathway; L-homocysteine from O-acetyl-L-homoserine: step 1/1. With respect to regulation, inhibited by methionine and cystathionine. In terms of biological role, catalyzes the conversion of O-acetyl-L-homoserine (OAH) into homocysteine in the methionine biosynthesis pathway. Can also use dimethyldisulfide and methanethiol as reduced sulfur sources, leading to the direct formation of methionine. Has weak cystathionine gamma-synthase activity. The chain is O-acetyl-L-homoserine sulfhydrylase from Corynebacterium glutamicum (strain ATCC 13032 / DSM 20300 / JCM 1318 / BCRC 11384 / CCUG 27702 / LMG 3730 / NBRC 12168 / NCIMB 10025 / NRRL B-2784 / 534).